The chain runs to 570 residues: Ribosome-inactivating protein SNAI (570 aa).

Positions 1-28 are cleaved as a signal peptide; the sequence is MRLVAKLLYLAVLAICGLGIHGALTHPR. Residues asparagine 40, asparagine 62, and asparagine 144 are each glycosylated (N-linked (GlcNAc...) asparagine). Residue glutamate 199 is part of the active site. The N-linked (GlcNAc...) asparagine glycan is linked to asparagine 260. 3 disulfide bridges follow: cysteine 284-cysteine 316, cysteine 332-cysteine 351, and cysteine 373-cysteine 385. 2 Ricin B-type lectin domains span residues 319-439 and 441-566; these read VEVT…WTVG and VEPL…WITT. Residues 329–369 form a 1-alpha repeat; the sequence is DGLCVDVRYGHYIDGNPVQLRPCGNECNQLWTFRTDGTIRW. One copy of the 1-beta repeat lies at 370–405; sequence LGKCLTASSSVMIYDCNTVPPEATKWVVSIDGTITN. The 1-gamma repeat unit spans residues 408-440; the sequence is SGLVLTAPQAAEGTALSLENNIHAARQGWTVGD. One copy of the 2-alpha repeat lies at 452-489; that stretch reads KQMCLRENGENNFVWLEDCVLNRVQQEWALYGDGTIRV. A disulfide bond links cysteine 455 and cysteine 470. An N-linked (GlcNAc...) asparagine glycan is attached at asparagine 492. A 2-beta repeat occupies 493 to 531; that stretch reads RSLCVTSEDHEPSDLIVILKCEGSGNQRWVFNTNGTISN. The cysteines at positions 496 and 513 are disulfide-linked. N-linked (GlcNAc...) asparagine glycosylation is present at asparagine 526. A 2-gamma repeat occupies 534 to 567; it reads AKLLMDVAQRDVSLRKIILYRPTGNPNQQWITTT.

Belongs to the ribosome-inactivating protein family. Type 2 RIP subfamily. In terms of assembly, tetramer of four pairs of disulfide bound A-B chains. In terms of processing, the precursor is processed in two chains, A and B, that are linked by a disulfide bond. A small truncated form corresponding roughly to the second ricin B-type lectin domain of the B chain, TrSNAI, can also be produced. Glycosylated. N-glycans of subunit A are (Man)2-3(Xyl)(GlcNAc)2(Fuc) at Asn-40, (GlcNAc)0-2(Man)3(Xyl)(GlcNAc)2(Fuc) or (Man)1-2(GlcNAc)2 at Asn-62, (Man)3(Xyl)(GlcNAc)2(Fuc)0-1 at Asn-144 and (GlcNAc)0-1(Man)3(Xyl)(GlcNAc)2(Fuc) at Asn-260. N-glycans of subunit B are (Man)3(Xyl)(GlcNAc)2(Fuc) at Asn-492 and (Man)6-9(GlcNAc)2 at Asn-526. Expressed in bark.

The enzyme catalyses Endohydrolysis of the N-glycosidic bond at one specific adenosine on the 28S rRNA.. Neu5Ac(alpha2-6)Gal/GalNAc specific agglutinin. Behaves as a type-2 ribosome-inactivating protein. Strongly inhibits mammalian but not plant ribosomes. The A chain is responsible for inhibiting protein synthesis through the catalytic inactivation of 60S ribosomal subunits by removing adenine from position 4,324 of 28S rRNA. The B chain binds to cell receptors and probably facilitates the entry into the cell of the A chain; B chains are also responsible for cell agglutination (lectin activity). Involved in plant defense against insects. In terms of biological role, binds Neu5Ac(alpha2-6)Gal/GalNAc but has no clear agglutination activity. The protein is Ribosome-inactivating protein SNAI of Sambucus nigra (European elder).